Here is a 608-residue protein sequence, read N- to C-terminus: 1-deoxy-D-xylulose-5-phosphate synthase (608 aa).

Thiamine diphosphate-binding positions include histidine 66 and 107-109 (GHA). Aspartate 138 is a Mg(2+) binding site. Thiamine diphosphate-binding positions include 139 to 140 (GA), asparagine 167, phenylalanine 277, and glutamate 350. Residue asparagine 167 participates in Mg(2+) binding.

This sequence belongs to the transketolase family. DXPS subfamily. In terms of assembly, homodimer. Requires Mg(2+) as cofactor. Thiamine diphosphate serves as cofactor.

It carries out the reaction D-glyceraldehyde 3-phosphate + pyruvate + H(+) = 1-deoxy-D-xylulose 5-phosphate + CO2. It participates in metabolic intermediate biosynthesis; 1-deoxy-D-xylulose 5-phosphate biosynthesis; 1-deoxy-D-xylulose 5-phosphate from D-glyceraldehyde 3-phosphate and pyruvate: step 1/1. Its function is as follows. Catalyzes the acyloin condensation reaction between C atoms 2 and 3 of pyruvate and glyceraldehyde 3-phosphate to yield 1-deoxy-D-xylulose-5-phosphate (DXP). This chain is 1-deoxy-D-xylulose-5-phosphate synthase, found in Thermotoga sp. (strain RQ2).